The primary structure comprises 216 residues: Uracil phosphoribosyltransferase (216 aa).

5-phospho-alpha-D-ribose 1-diphosphate is bound by residues Arg85, Arg110, and 135 to 143 (DPMVATGYS). Uracil is bound by residues Ile200 and 205 to 207 (GDA). Asp206 serves as a coordination point for 5-phospho-alpha-D-ribose 1-diphosphate.

This sequence belongs to the UPRTase family. Mg(2+) is required as a cofactor.

It carries out the reaction UMP + diphosphate = 5-phospho-alpha-D-ribose 1-diphosphate + uracil. Its pathway is pyrimidine metabolism; UMP biosynthesis via salvage pathway; UMP from uracil: step 1/1. With respect to regulation, allosterically activated by GTP. Functionally, catalyzes the conversion of uracil and 5-phospho-alpha-D-ribose 1-diphosphate (PRPP) to UMP and diphosphate. This is Uracil phosphoribosyltransferase from Burkholderia ambifaria (strain ATCC BAA-244 / DSM 16087 / CCUG 44356 / LMG 19182 / AMMD) (Burkholderia cepacia (strain AMMD)).